A 657-amino-acid polypeptide reads, in one-letter code: UvrABC system protein B (657 aa).

The Helicase ATP-binding domain maps to 25–182 (KSIKKGNEFQ…KKLIEIQYER (158 aa)). 38 to 45 (GVTGSGKT) contacts ATP. The short motif at 91–114 (YYDYYQPEAYVPQTDTFIEKDASI) is the Beta-hairpin element. One can recognise a Helicase C-terminal domain in the interval 429-595 (QIDDLYTEIQ…TINKEVRDLI (167 aa)). A UVR domain is found at 621–656 (KKLIKEYTEEMMLAAKNLQFERAAQLRDEIEELKGK).

Belongs to the UvrB family. In terms of assembly, forms a heterotetramer with UvrA during the search for lesions. Interacts with UvrC in an incision complex.

It is found in the cytoplasm. Functionally, the UvrABC repair system catalyzes the recognition and processing of DNA lesions. A damage recognition complex composed of 2 UvrA and 2 UvrB subunits scans DNA for abnormalities. Upon binding of the UvrA(2)B(2) complex to a putative damaged site, the DNA wraps around one UvrB monomer. DNA wrap is dependent on ATP binding by UvrB and probably causes local melting of the DNA helix, facilitating insertion of UvrB beta-hairpin between the DNA strands. Then UvrB probes one DNA strand for the presence of a lesion. If a lesion is found the UvrA subunits dissociate and the UvrB-DNA preincision complex is formed. This complex is subsequently bound by UvrC and the second UvrB is released. If no lesion is found, the DNA wraps around the other UvrB subunit that will check the other stand for damage. In Clostridium botulinum (strain Alaska E43 / Type E3), this protein is UvrABC system protein B.